The following is a 103-amino-acid chain: Large ribosomal subunit protein bL21 (103 aa).

Belongs to the bacterial ribosomal protein bL21 family. In terms of assembly, part of the 50S ribosomal subunit. Contacts protein L20.

Functionally, this protein binds to 23S rRNA in the presence of protein L20. This chain is Large ribosomal subunit protein bL21, found in Parvibaculum lavamentivorans (strain DS-1 / DSM 13023 / NCIMB 13966).